The chain runs to 163 residues: MAKDSSFDIVSKVEMQEVINAVHQAQKEIEQRFDFKNSKSSLELQDEKIILVSDDDFKLRNVIDILESKLVKRQVSLKALEYGKVQPAAGDTVRQEVKLVQGISQDKGKEINKLIKDSKIKVSSSIQGDQVRVTGKNKDDLQEVIALLRKQDLGIDLQFINYR.

The protein belongs to the YajQ family.

Nucleotide-binding protein. The sequence is that of Nucleotide-binding protein Dhaf_3127 from Desulfitobacterium hafniense (strain DSM 10664 / DCB-2).